The primary structure comprises 340 residues: Probable rRNA-processing protein EBP2 homolog (340 aa).

The segment covering 1-10 has biased composition (basic residues); sequence MVRKMNKLAK. 2 disordered regions span residues 1–59 and 245–340; these read MVRK…DDDE and HGLD…RGRR. Acidic residues-rich tracts occupy residues 23–37 and 46–59; these read PESD…FDNA and MDIE…DDDE. The stretch at 206 to 245 forms a coiled coil; sequence QKEVLAAKNTEKKNLAEAVKKHKKGMKQQLEDMLNNVKRH. 2 stretches are compositionally biased toward gly residues: residues 264-277 and 318-333; these read GRGG…GRGG and PRGG…GRGG.

The protein belongs to the EBP2 family.

It localises to the nucleus. The protein localises to the nucleolus. Its function is as follows. Required for the processing of the 27S pre-rRNA. The protein is Probable rRNA-processing protein EBP2 homolog of Caenorhabditis elegans.